The chain runs to 224 residues: Octanoyl-[acyl-carrier-protein]:protein N-octanoyltransferase LIPT2, mitochondrial (224 aa).

The BPL/LPL catalytic domain occupies S37 to L217. Substrate-binding positions include R81–H88, A147–G149, and G160–A162. C178 (acyl-thioester intermediate) is an active-site residue.

It belongs to the LipB family.

The protein resides in the mitochondrion. The enzyme catalyses octanoyl-[ACP] + L-lysyl-[protein] = N(6)-octanoyl-L-lysyl-[protein] + holo-[ACP] + H(+). It participates in protein modification; protein lipoylation via endogenous pathway; protein N(6)-(lipoyl)lysine from octanoyl-[acyl-carrier-protein]: step 1/2. In terms of biological role, catalyzes the transfer of endogenously produced octanoic acid from octanoyl-acyl-carrier-protein (octanoyl-ACP) onto the lipoyl domains of lipoate-dependent enzymes such as the protein H of the glycine cleavage system (GCSH). Lipoyl-ACP can also act as a substrate although octanoyl-ACP is likely to be the physiological substrate. This is Octanoyl-[acyl-carrier-protein]:protein N-octanoyltransferase LIPT2, mitochondrial (lipt2) from Danio rerio (Zebrafish).